A 220-amino-acid polypeptide reads, in one-letter code: UPF0643 protein PB2B2.08 (220 aa).

The protein belongs to the UPF0643 family.

Its subcellular location is the cytoplasm. It is found in the nucleus. The polypeptide is UPF0643 protein PB2B2.08 (Schizosaccharomyces pombe (strain 972 / ATCC 24843) (Fission yeast)).